Here is a 453-residue protein sequence, read N- to C-terminus: Mitochondrial import inner membrane translocase subunit TIM44 (453 aa).

Residue Thr129 is modified to Phosphothreonine. Residue Gly167–Thr174 coordinates ATP. Lys178 is modified (N6-succinyllysine). Position 181 is a phosphoserine (Ser181). Lys218 bears the N6-succinyllysine mark.

This sequence belongs to the Tim44 family. As to quaternary structure, probable component of the PAM complex at least composed of a mitochondrial HSP70 protein, GRPEL1 or GRPEL2, TIMM44, TIMM16/PAM16 and TIMM14/DNAJC19. The complex interacts with the TIMM23 component of the TIM23 complex. Interacts with SLC25A4/ANT1 and SLC25A5/ANT2; leading to inhibit the presequence translocase TIMM23, thereby promoting stabilization of PINK1.

Its subcellular location is the mitochondrion inner membrane. The protein localises to the mitochondrion matrix. Its function is as follows. Essential component of the PAM complex, a complex required for the translocation of transit peptide-containing proteins from the inner membrane into the mitochondrial matrix in an ATP-dependent manner. Recruits mitochondrial HSP70 to drive protein translocation into the matrix using ATP as an energy source. This Rattus norvegicus (Rat) protein is Mitochondrial import inner membrane translocase subunit TIM44 (Timm44).